Here is a 290-residue protein sequence, read N- to C-terminus: Xyloglucan endotransglucosylase/hydrolase protein 3 (290 aa).

The signal sequence occupies residues Met-1–Ala-21. The GH16 domain maps to Arg-22 to Phe-220. Glu-109 functions as the Nucleophile in the catalytic mechanism. Glu-113 acts as the Proton donor in catalysis. Xyloglucan-binding positions include Glu-113, Gln-126–Asn-128, Asn-136–Glu-138, Asp-199–Trp-200, and Gly-204. Asn-210 is a glycosylation site (N-linked (GlcNAc...) asparagine). 2 cysteine pairs are disulfide-bonded: Cys-228/Cys-240 and Cys-276/Cys-289.

This sequence belongs to the glycosyl hydrolase 16 family. XTH group 1 subfamily. Contains at least one intrachain disulfide bond essential for its enzymatic activity. Predominantly expressed in flower buds.

The protein localises to the secreted. It is found in the cell wall. Its subcellular location is the extracellular space. The protein resides in the apoplast. It carries out the reaction breaks a beta-(1-&gt;4) bond in the backbone of a xyloglucan and transfers the xyloglucanyl segment on to O-4 of the non-reducing terminal glucose residue of an acceptor, which can be a xyloglucan or an oligosaccharide of xyloglucan.. Functionally, catalyzes xyloglucan endohydrolysis (XEH) and/or endotransglycosylation (XET). Cleaves and religates xyloglucan polymers, an essential constituent of the primary cell wall, and thereby participates in cell wall construction of growing tissues. The protein is Xyloglucan endotransglucosylase/hydrolase protein 3 (XTH3) of Arabidopsis thaliana (Mouse-ear cress).